The following is a 245-amino-acid chain: Interleukin-1 receptor-associated kinase 1-binding protein 1 homolog (245 aa).

Belongs to the IRAK1BP1 family.

It is found in the cytoplasm. It localises to the nucleus. May be part of a signaling pathway that leads to NF-kappa-B activation. This is Interleukin-1 receptor-associated kinase 1-binding protein 1 homolog (irak1bp1) from Xenopus laevis (African clawed frog).